A 422-amino-acid polypeptide reads, in one-letter code: Histidine--tRNA ligase (422 aa).

The protein belongs to the class-II aminoacyl-tRNA synthetase family. In terms of assembly, homodimer.

The protein resides in the cytoplasm. The catalysed reaction is tRNA(His) + L-histidine + ATP = L-histidyl-tRNA(His) + AMP + diphosphate + H(+). This chain is Histidine--tRNA ligase, found in Vibrio cholerae serotype O1 (strain ATCC 39541 / Classical Ogawa 395 / O395).